Here is a 527-residue protein sequence, read N- to C-terminus: UvrABC system protein C (527 aa).

The GIY-YIG domain occupies 9–87 (KNPGCYIYKN…IKKYSPKYNI (79 aa)). Residues 191-226 (DSLIHELKNEMNEKSKNLQFEEALLIREEINAIERL) form the UVR domain.

The protein belongs to the UvrC family. As to quaternary structure, interacts with UvrB in an incision complex.

It localises to the cytoplasm. Its function is as follows. The UvrABC repair system catalyzes the recognition and processing of DNA lesions. UvrC both incises the 5' and 3' sides of the lesion. The N-terminal half is responsible for the 3' incision and the C-terminal half is responsible for the 5' incision. This chain is UvrABC system protein C, found in Methanococcus maripaludis (strain DSM 14266 / JCM 13030 / NBRC 101832 / S2 / LL).